The following is an 82-amino-acid chain: Delta-ctenitoxin-Pn2a (82 aa).

The signal sequence occupies residues 1-17 (MKVAILFLSILVLAVAS). Residues 18-34 (ESIEESRDDFAVEELGR) constitute a propeptide that is removed on maturation. Intrachain disulfides connect Cys37–Cys51, Cys44–Cys57, Cys48–Cys80, Cys50–Cys65, and Cys59–Cys63.

Belongs to the neurotoxin 03 (Tx2) family. 06 subfamily. Expressed by the venom gland.

The protein resides in the secreted. In terms of biological role, toxin that is known to potentiate erectile function. It binds voltage-dependently to sodium channels (Nav), inhibits the inactivation of the activated channels and decreases the peak inward current. The toxin delays inactivation of Nav1.2/SCN2A, Nav1.3/SCN3A, Nav1.4/SCN4A and Nav1.8/SCN10A, slows the inactivation process and decreases the sodium peak amplitude of Nav1.5/SCN5A and Nav1.6/SCN8A. In vivo, it enhances erectile function by inducing the release of nictric oxide (NO): it slows the sodium current, leading to depolarization, which leads to an increase in calcium influx (probably via activation of N-type calcium channels) which in turn activates neuronal NO synthase (nNOS/NOS1), inducing nitric oxide (NO) production. In a final step, NO activates soluble guanylate cyclase (GUCY1A1/GUCY1B1) which in turn increases cGMP formation, resulting in penile erection. It is noteworthy that the toxin does not provoke erection by inhibiting phosphodiesterase type 5 (PDE5A), an enzyme that hydrolysis cGMP. In vivo, it also causes scratching, lacrimation, hypersalivation, sweating and agitation followed by spastic paralysis of the anterior and posterior extremities and death at dose levels of 0.79 mg/mouse. It is insecticidal to the larval and adult forms of the house fly. The toxin also improves cavernosal relaxation in different models where erectile dysfunction is observed, such as deoxycorticosterone-acetate (DOCA)-salt hypertensive rats, mice models for type-1 diabetes, as well as elderly rats. The polypeptide is Delta-ctenitoxin-Pn2a (Phoneutria nigriventer (Brazilian armed spider)).